Here is a 425-residue protein sequence, read N- to C-terminus: Dihydroorotase (425 aa).

Zn(2+)-binding residues include His61 and His63. Residues 63–65 (HLR) and Asn95 each bind substrate. Residues Asp153, His180, and His233 each contribute to the Zn(2+) site. Asn279 lines the substrate pocket. Asp306 lines the Zn(2+) pocket. The active site involves Asp306. His310 serves as a coordination point for substrate.

Belongs to the metallo-dependent hydrolases superfamily. DHOase family. Class I DHOase subfamily. It depends on Zn(2+) as a cofactor.

It catalyses the reaction (S)-dihydroorotate + H2O = N-carbamoyl-L-aspartate + H(+). It participates in pyrimidine metabolism; UMP biosynthesis via de novo pathway; (S)-dihydroorotate from bicarbonate: step 3/3. In terms of biological role, catalyzes the reversible cyclization of carbamoyl aspartate to dihydroorotate. This chain is Dihydroorotase, found in Geobacter sp. (strain M21).